Reading from the N-terminus, the 315-residue chain is Ribosomal RNA small subunit methyltransferase H (315 aa).

S-adenosyl-L-methionine-binding positions include Gly-33 to His-35, Asp-52, Phe-84, Asp-106, and Gln-113. The disordered stretch occupies residues Pro-290–Leu-315. Polar residues predominate over residues Thr-292–Ser-304.

Belongs to the methyltransferase superfamily. RsmH family.

It is found in the cytoplasm. The catalysed reaction is cytidine(1402) in 16S rRNA + S-adenosyl-L-methionine = N(4)-methylcytidine(1402) in 16S rRNA + S-adenosyl-L-homocysteine + H(+). Its function is as follows. Specifically methylates the N4 position of cytidine in position 1402 (C1402) of 16S rRNA. The chain is Ribosomal RNA small subunit methyltransferase H from Lactobacillus helveticus (strain DPC 4571).